A 144-amino-acid polypeptide reads, in one-letter code: uncharacterized protein (144 aa).

An HTH lysR-type domain is found at 1–58 (MDLASLNAFIAVAETGSFSEAGERLHLTQPAVSKRIAALEQQLQVRLFDRLGREVRLT). Residues 18 to 38 (FSEAGERLHLTQPAVSKRIAA) constitute a DNA-binding region (H-T-H motif).

Belongs to the LysR transcriptional regulatory family.

This is an uncharacterized protein from Azotobacter vinelandii.